A 663-amino-acid chain; its full sequence is UvrABC system protein B (663 aa).

In terms of domain architecture, Helicase ATP-binding spans 31–418; the sequence is DNIEGGEKAQ…TDTVVEQIIR (388 aa). 44–51 provides a ligand contact to ATP; it reads GATGTGKT. The short motif at 97–120 is the Beta-hairpin element; that stretch reads YYDYYQPEAYVPSSDTYIEKDSSV. Residues 435–601 enclose the Helicase C-terminal domain; that stretch reads QMDDLLGEIN…TIKKEIRDLI (167 aa). Residues 627-662 form the UVR domain; sequence QAEIKALQKQMQEAAELLDFELAAQIRDVILKLKAI.

Belongs to the UvrB family. In terms of assembly, forms a heterotetramer with UvrA during the search for lesions. Interacts with UvrC in an incision complex.

It is found in the cytoplasm. The UvrABC repair system catalyzes the recognition and processing of DNA lesions. A damage recognition complex composed of 2 UvrA and 2 UvrB subunits scans DNA for abnormalities. Upon binding of the UvrA(2)B(2) complex to a putative damaged site, the DNA wraps around one UvrB monomer. DNA wrap is dependent on ATP binding by UvrB and probably causes local melting of the DNA helix, facilitating insertion of UvrB beta-hairpin between the DNA strands. Then UvrB probes one DNA strand for the presence of a lesion. If a lesion is found the UvrA subunits dissociate and the UvrB-DNA preincision complex is formed. This complex is subsequently bound by UvrC and the second UvrB is released. If no lesion is found, the DNA wraps around the other UvrB subunit that will check the other stand for damage. In Streptococcus agalactiae serotype Ia (strain ATCC 27591 / A909 / CDC SS700), this protein is UvrABC system protein B.